Here is a 154-residue protein sequence, read N- to C-terminus: Egg-lysin (154 aa).

An N-terminal signal peptide occupies residues 1–18; that stretch reads MKLLVLWVFAMMATVAMS.

In terms of assembly, monomer. Homodimer. Molecules associate into dimers and then rapidly dissociate again. Interacts (as a monomer) with the egg vitelline layer protein VERL (via VERL repeats); each VERL chain can bind multiple copies of lysin. Sperm.

It is found in the cytoplasmic vesicle. The protein resides in the secretory vesicle. The protein localises to the acrosome lumen. Its function is as follows. Creates a 3 um hole in the egg vitelline layer through which the sperm passes. Does not have enzyme activity. Species-specific interaction between the sperm protein lysin and the egg protein VERL exposes a basic surface on lysin that may dissociate the egg vitelline layer via electrostatic repulsion. Plays a role in ensuring species-specific fertilization. The polypeptide is Egg-lysin (Haliotis fulgens (Green abalone)).